A 344-amino-acid polypeptide reads, in one-letter code: Phenylalanine--tRNA ligase alpha subunit (344 aa).

Glutamate 259 contributes to the Mg(2+) binding site.

The protein belongs to the class-II aminoacyl-tRNA synthetase family. Phe-tRNA synthetase alpha subunit type 1 subfamily. In terms of assembly, tetramer of two alpha and two beta subunits. Requires Mg(2+) as cofactor.

It is found in the cytoplasm. It carries out the reaction tRNA(Phe) + L-phenylalanine + ATP = L-phenylalanyl-tRNA(Phe) + AMP + diphosphate + H(+). The sequence is that of Phenylalanine--tRNA ligase alpha subunit from Nitrosospira multiformis (strain ATCC 25196 / NCIMB 11849 / C 71).